The chain runs to 580 residues: Rho guanine nucleotide exchange factor 25 (580 aa).

Low complexity predominate over residues 48 to 67; the sequence is AASGLAAPSGPSSGLSSGPC. Disordered regions lie at residues 48–76 and 128–157; these read AASG…GPVS and LEGP…KKKA. The DH domain maps to 160–336; that stretch reads RSMYVLSELV…CFVPKRCNDM (177 aa). Positions 278–299 are important for binding to Rho GTPases; the sequence is LGHRLQLNDLLIKPVQRIMKYQ. Positions 348-466 constitute a PH domain; sequence KLTAQGKLLG…WIKHVAQILE (119 aa). A sufficient to bind activated GNAQ region spans residues 467–493; that stretch reads SQRDFLNALQSPIEYQRRESQTNSLGR. 2 disordered regions span residues 482–524 and 545–580; these read QRRE…GSLP and ALGD…EDEL. Residues 509–520 show a composition bias toward polar residues; the sequence is DQAQGSTHTPIN. Over residues 555–566 the composition is skewed to pro residues; that stretch reads DSPPVSPTPKTP.

Interacts (via the DH domain) with POPDC1 (via the C-terminus cytoplasmic tail). Interacts with activated GNAQ and GNA11. Interacts with RHOA, CDC42 and RAC1. As to expression, isoform 1 and isoform 2 are highly expressed in excitable tissues, such as brain, heart and muscle. Also detected in kidney and liver.

It is found in the cell membrane. The protein resides in the cytoplasm. Its subcellular location is the myofibril. The protein localises to the sarcomere. May play a role in actin cytoskeleton reorganization in different tissues since its activation induces formation of actin stress fibers. It works as a guanine nucleotide exchange factor for Rho family of small GTPases. Links specifically G alpha q/11-coupled receptors to RHOA activation. May be an important regulator of processes involved in axon and dendrite formation. In neurons seems to be an exchange factor primarily for RAC1. Involved in skeletal myogenesis. The polypeptide is Rho guanine nucleotide exchange factor 25 (ARHGEF25) (Homo sapiens (Human)).